Here is a 239-residue protein sequence, read N- to C-terminus: Homeobox protein Nkx-2.8 (239 aa).

Residues 1–11 (MATSGRLSFTV) show a composition bias toward polar residues. A disordered region spans residues 1-87 (MATSGRLSFT…GSDAEKRKKR (87 aa)). A compositionally biased stretch (basic and acidic residues) spans 21 to 32 (DAQHLPRREPEP). Residues 62–79 (SPPDSSQRPSARPASPGS) show a composition bias toward low complexity. Positions 84–143 (RKKRRVLFSKAQTLELERRFRQQRYLSAPEREQLASLLRLTPTQVKIWFQNHRYKLKRAR) form a DNA-binding region, homeobox.

It belongs to the NK-2 homeobox family.

It is found in the nucleus. This Homo sapiens (Human) protein is Homeobox protein Nkx-2.8 (NKX2-8).